Consider the following 80-residue polypeptide: UPF0125 protein XF_2346 (80 aa).

This sequence belongs to the UPF0125 (RnfH) family.

The sequence is that of UPF0125 protein XF_2346 from Xylella fastidiosa (strain 9a5c).